We begin with the raw amino-acid sequence, 454 residues long: uncharacterized protein (454 aa).

The HNH domain maps to 364 to 405; the sequence is CSRPGCDAPAYHSEVHHVTPWTTTHRTDINDLTLACGPDNRL.

It belongs to the Rv1128c/1148c/1588c/1702c/1945/3466 family.

This is an uncharacterized protein from Mycobacterium tuberculosis (strain ATCC 25618 / H37Rv).